Reading from the N-terminus, the 448-residue chain is Gamete and mating-type specific protein A (448 aa).

The signal sequence occupies residues 1–19; that stretch reads MKLILVLLCLISTLFVVKG. Residues 30–157 enclose the SCP domain; sequence VSYHNKWRSS…PDKSEVSCSY (128 aa). N-linked (GlcNAc...) asparagine glycosylation is found at Asn-55, Asn-98, and Asn-119. The interval 171–242 is disordered; the sequence is PKTTTPAPTT…PTTPAPTSTL (72 aa). Residues 178-236 show a composition bias toward pro residues; that stretch reads PTTPAPTTPKPTTPAPTTPKPTTPAPTTPKPTTPAPTTPKPTTPAPTTPKPTTPAPTTP. Residues Cys-262, His-397, and Asn-415 contribute to the active site.

Belongs to the peptidase C1 family.

It is found in the secreted. Functionally, thiol protease that seems to be involved in the sexual development. This Dictyostelium discoideum (Social amoeba) protein is Gamete and mating-type specific protein A (gmsA).